Here is a 395-residue protein sequence, read N- to C-terminus: NAD(P)H-quinone oxidoreductase subunit H, chloroplastic (395 aa).

Belongs to the complex I 49 kDa subunit family. NDH is composed of at least 16 different subunits, 5 of which are encoded in the nucleus.

Its subcellular location is the plastid. It is found in the chloroplast thylakoid membrane. It carries out the reaction a plastoquinone + NADH + (n+1) H(+)(in) = a plastoquinol + NAD(+) + n H(+)(out). It catalyses the reaction a plastoquinone + NADPH + (n+1) H(+)(in) = a plastoquinol + NADP(+) + n H(+)(out). NDH shuttles electrons from NAD(P)H:plastoquinone, via FMN and iron-sulfur (Fe-S) centers, to quinones in the photosynthetic chain and possibly in a chloroplast respiratory chain. The immediate electron acceptor for the enzyme in this species is believed to be plastoquinone. Couples the redox reaction to proton translocation, and thus conserves the redox energy in a proton gradient. The protein is NAD(P)H-quinone oxidoreductase subunit H, chloroplastic of Citrus sinensis (Sweet orange).